The primary structure comprises 399 residues: Probable 2-isopropylmalate synthase (399 aa).

In terms of domain architecture, Pyruvate carboxyltransferase spans 20 to 272 (VRIFDTTLRD…RTGVNTKLLY (253 aa)). A divalent metal cation is bound by residues aspartate 29, histidine 210, histidine 212, and asparagine 246.

Belongs to the alpha-IPM synthase/homocitrate synthase family. Homodimer. A divalent metal cation serves as cofactor.

It catalyses the reaction 3-methyl-2-oxobutanoate + acetyl-CoA + H2O = (2S)-2-isopropylmalate + CoA + H(+). It functions in the pathway amino-acid biosynthesis; L-leucine biosynthesis; L-leucine from 3-methyl-2-oxobutanoate: step 1/4. Functionally, catalyzes the condensation of the acetyl group of acetyl-CoA with 3-methyl-2-oxobutanoate (2-oxoisovalerate) to form 3-carboxy-3-hydroxy-4-methylpentanoate (2-isopropylmalate). This chain is Probable 2-isopropylmalate synthase (leuA), found in Ignicoccus hospitalis (strain KIN4/I / DSM 18386 / JCM 14125).